Reading from the N-terminus, the 512-residue chain is 2-isopropylmalate synthase (512 aa).

Positions 4 to 266 (IQFFDTTLRD…ETNIVLNQFK (263 aa)) constitute a Pyruvate carboxyltransferase domain. Positions 13, 201, 203, and 237 each coordinate Mn(2+). The interval 390–512 (ELKHLQVQYV…TKQVDFEEVK (123 aa)) is regulatory domain.

It belongs to the alpha-IPM synthase/homocitrate synthase family. LeuA type 1 subfamily. Homodimer. Requires Mn(2+) as cofactor.

It is found in the cytoplasm. It carries out the reaction 3-methyl-2-oxobutanoate + acetyl-CoA + H2O = (2S)-2-isopropylmalate + CoA + H(+). It functions in the pathway amino-acid biosynthesis; L-leucine biosynthesis; L-leucine from 3-methyl-2-oxobutanoate: step 1/4. Catalyzes the condensation of the acetyl group of acetyl-CoA with 3-methyl-2-oxobutanoate (2-ketoisovalerate) to form 3-carboxy-3-hydroxy-4-methylpentanoate (2-isopropylmalate). The chain is 2-isopropylmalate synthase from Listeria welshimeri serovar 6b (strain ATCC 35897 / DSM 20650 / CCUG 15529 / CIP 8149 / NCTC 11857 / SLCC 5334 / V8).